The chain runs to 312 residues: DDRGK domain-containing protein 1 (312 aa).

Residues 1–2 (ME) are Lumenal-facing. A helical transmembrane segment spans residues 3 to 23 (LIILVGIAIALLVVIITLYLL). Over 24 to 312 (QKKNAAPETK…ISAGGEEASS (289 aa)) the chain is Cytoplasmic. Residues 30 to 163 (PETKPAAAPQ…KQQEDLEAEV (134 aa)) form a disordered region. The segment covering 52–85 (RRAQIARNQRNRLRQNAPAAPAGQVAPAAGAPAA) has biased composition (low complexity). Over residues 90–99 (DHEDEGQVDA) the composition is skewed to acidic residues. Residues 110–163 (LDEKMGAKKRAKMEAKEQKRLQREQELHDREQRKVKEAKEEAERKQQEDLEAEV) are compositionally biased toward basic and acidic residues.

It belongs to the DDRGK1 family. Interacts with Atg9; the interaction is transient.

The protein resides in the endoplasmic reticulum membrane. Functionally, substrate adapter for ufmylation, the covalent attachment of the ubiquitin-like modifier UFM1 to substrate proteins. Required for ufmylation of Atg9; protects the nervous system during aging, possibly by stabilizing Atg9 and supporting its function. The protein is DDRGK domain-containing protein 1 of Drosophila erecta (Fruit fly).